Here is a 215-residue protein sequence, read N- to C-terminus: Cytochrome b6 (215 aa).

A helical transmembrane segment spans residues 32 to 52 (IFYCLGGITFTSFVIQVASGF). Heme c is bound at residue Cys35. His86 and His100 together coordinate heme b. A run of 3 helical transmembrane segments spans residues 90 to 110 (ASMM…TGGF), 116 to 136 (LTWV…VTGY), and 186 to 206 (LHTF…FLMI). His187 and His202 together coordinate heme b.

This sequence belongs to the cytochrome b family. PetB subfamily. As to quaternary structure, the 4 large subunits of the cytochrome b6-f complex are cytochrome b6, subunit IV (17 kDa polypeptide, PetD), cytochrome f and the Rieske protein, while the 4 small subunits are PetG, PetL, PetM and PetN. The complex functions as a dimer. The cofactor is heme b. It depends on heme c as a cofactor.

It is found in the plastid. Its subcellular location is the chloroplast thylakoid membrane. Functionally, component of the cytochrome b6-f complex, which mediates electron transfer between photosystem II (PSII) and photosystem I (PSI), cyclic electron flow around PSI, and state transitions. The protein is Cytochrome b6 of Chaetosphaeridium globosum (Charophycean green alga).